We begin with the raw amino-acid sequence, 307 residues long: Mitochondrial glycine transporter (307 aa).

3 Solcar repeats span residues 8 to 87, 115 to 199, and 221 to 305; these read PRNS…MRSS, LTMY…SKQL, and TSTT…LVKR. The next 6 helical transmembrane spans lie at 14–39, 62–88, 121–146, 174–197, 225–251, and 280–298; these read LIGG…TRIQ, GTLP…RSSL, LLTG…VRYE, GFGA…EKSK, VNTT…KTRM, and GLSM…AWGI.

The protein belongs to the mitochondrial carrier (TC 2.A.29) family. SLC25A38 subfamily.

Its subcellular location is the mitochondrion inner membrane. The catalysed reaction is glycine(in) = glycine(out). Functionally, mitochondrial glycine transporter that imports glycine into the mitochondrial matrix. Plays an important role in providing glycine for the first enzymatic step in heme biosynthesis, the condensation of glycine with succinyl-CoA to produce 5-aminolevulinate (ALA) in the mitochondrial matrix. The chain is Mitochondrial glycine transporter from Saccharomyces cerevisiae (strain RM11-1a) (Baker's yeast).